The sequence spans 88 residues: Co-chaperonin GroES (88 aa).

This sequence belongs to the GroES chaperonin family. Heptamer of 7 subunits arranged in a ring. Interacts with the chaperonin GroEL.

The protein resides in the cytoplasm. In terms of biological role, together with the chaperonin GroEL, plays an essential role in assisting protein folding. The GroEL-GroES system forms a nano-cage that allows encapsulation of the non-native substrate proteins and provides a physical environment optimized to promote and accelerate protein folding. GroES binds to the apical surface of the GroEL ring, thereby capping the opening of the GroEL channel. This Treponema denticola (strain ATCC 35405 / DSM 14222 / CIP 103919 / JCM 8153 / KCTC 15104) protein is Co-chaperonin GroES.